The chain runs to 417 residues: Serine hydroxymethyltransferase (417 aa).

Position 54 is an N6-acetyllysine (lysine 54). (6S)-5,6,7,8-tetrahydrofolate is bound by residues leucine 121 and 125–127 (GHL). Residue lysine 229 is modified to N6-(pyridoxal phosphate)lysine. 3 positions are modified to N6-acetyllysine: lysine 250, lysine 285, and lysine 354. 355 to 357 (SPF) is a (6S)-5,6,7,8-tetrahydrofolate binding site. Lysine 375 bears the N6-acetyllysine mark.

This sequence belongs to the SHMT family. In terms of assembly, homodimer. Pyridoxal 5'-phosphate serves as cofactor.

Its subcellular location is the cytoplasm. It carries out the reaction (6R)-5,10-methylene-5,6,7,8-tetrahydrofolate + glycine + H2O = (6S)-5,6,7,8-tetrahydrofolate + L-serine. Its pathway is one-carbon metabolism; tetrahydrofolate interconversion. The protein operates within amino-acid biosynthesis; glycine biosynthesis; glycine from L-serine: step 1/1. Its function is as follows. Catalyzes the reversible interconversion of serine and glycine with tetrahydrofolate (THF) serving as the one-carbon carrier. This reaction serves as the major source of one-carbon groups required for the biosynthesis of purines, thymidylate, methionine, and other important biomolecules. Also exhibits THF-independent aldolase activity toward beta-hydroxyamino acids, producing glycine and aldehydes, via a retro-aldol mechanism. The protein is Serine hydroxymethyltransferase of Escherichia coli O157:H7.